A 185-amino-acid chain; its full sequence is Large ribosomal subunit protein uL22 (185 aa).

Residues 157–185 form a disordered region; sequence VAAPSPEEDAPKKKQSKKKMARQKLMQRD. Residues 169–178 show a composition bias toward basic residues; the sequence is KKQSKKKMAR.

This sequence belongs to the universal ribosomal protein uL22 family.

This Ixodes scapularis (Black-legged tick) protein is Large ribosomal subunit protein uL22 (RpL17).